Here is a 222-residue protein sequence, read N- to C-terminus: UPF0758 protein YE0063 (222 aa).

The region spanning 100-222 (VLQNPEITQK…CVSFAERGWL (123 aa)) is the MPN domain. Zn(2+) contacts are provided by histidine 171, histidine 173, and aspartate 184. The JAMM motif motif lies at 171-184 (HNHPSGKAEPSQAD).

This sequence belongs to the UPF0758 family. YicR subfamily.

In Yersinia enterocolitica serotype O:8 / biotype 1B (strain NCTC 13174 / 8081), this protein is UPF0758 protein YE0063.